An 86-amino-acid polypeptide reads, in one-letter code: Muscarinic toxin 38 (86 aa).

The signal sequence occupies residues 1-21 (MKTLLLTLVVVTIVCLDLGYT). Intrachain disulfides connect cysteine 24–cysteine 45, cysteine 38–cysteine 63, cysteine 67–cysteine 78, and cysteine 79–cysteine 84.

The protein belongs to the three-finger toxin family. Short-chain subfamily. Aminergic toxin sub-subfamily. Monomer. In terms of tissue distribution, expressed by the venom gland.

Its subcellular location is the secreted. In terms of biological role, binds to the muscarinic acetylcholine receptor (CHRM). The sequence is that of Muscarinic toxin 38 from Ophiophagus hannah (King cobra).